The following is a 172-amino-acid chain: Low molecular mass early light-inducible protein HV90, chloroplastic (172 aa).

A chloroplast-targeting transit peptide spans 1–38 (MATMMSMSSFAGAAVVPRSSASSFGARSLPALGRRALV). A run of 2 helical transmembrane segments spans residues 106 to 126 (GQAW…VPLL) and 150 to 170 (FAML…APFI).

Belongs to the ELIP/psbS family.

The protein resides in the plastid. Its subcellular location is the chloroplast membrane. Probably involved in the integration of pigments into the mature pigment-protein complexes. This chain is Low molecular mass early light-inducible protein HV90, chloroplastic, found in Hordeum vulgare (Barley).